We begin with the raw amino-acid sequence, 117 residues long: Hainantoxin-XV-2 (117 aa).

The first 20 residues, 1–20, serve as a signal peptide directing secretion; sequence MKLCAVIIASLLVCVAVASS. A disordered region spans residues 20 to 55; sequence SSDNQKEFAQEKEMTREETQSLGEHEKDDEVTGSEE. The propeptide occupies 21–56; it reads SDNQKEFAQEKEMTREETQSLGEHEKDDEVTGSEER. Residues 23 to 55 are compositionally biased toward basic and acidic residues; that stretch reads NQKEFAQEKEMTREETQSLGEHEKDDEVTGSEE. Intrachain disulfides connect Cys58–Cys72, Cys65–Cys78, Cys69–Cys115, and Cys71–Cys91.

It belongs to the neurotoxin 03 (Tx2) family. 02 subfamily. HNTX-XV sub-subfamily. In terms of tissue distribution, expressed by the venom gland.

The protein localises to the secreted. Functionally, putative ion channel inhibitor. The protein is Hainantoxin-XV-2 of Cyriopagopus hainanus (Chinese bird spider).